The chain runs to 251 residues: Probable transcriptional regulatory protein Mflv_3828 (251 aa).

It belongs to the TACO1 family.

It localises to the cytoplasm. The chain is Probable transcriptional regulatory protein Mflv_3828 from Mycolicibacterium gilvum (strain PYR-GCK) (Mycobacterium gilvum (strain PYR-GCK)).